Here is a 167-residue protein sequence, read N- to C-terminus: Outer envelope pore protein 21A, chloroplastic (167 aa).

At 1–21 the chain is on the cytoplasmic side; that stretch reads METSLRYATNSRSLKIHAKEK. Residues 22–31 traverse the membrane as a beta stranded segment; it reads FPVNSKTRLQ. Topologically, residues 32 to 55 are chloroplast intermembrane; the sequence is LHGELDTGAGVPSYFCAMIRYFFH. The beta stranded transmembrane segment at 56-65 threads the bilayer; the sequence is EASTNLGVGL. Residues 66–71 are Cytoplasmic-facing; that stretch reads HYDKRE. A beta stranded membrane pass occupies residues 72-81; it reads KLRCLVRGKK. The Chloroplast intermembrane portion of the chain corresponds to 82–87; that stretch reads KFPVIT. The beta stranded transmembrane segment at 88–97 threads the bilayer; sequence DEVVTFNIKG. The Cytoplasmic portion of the chain corresponds to 98–110; that stretch reads RCDFDQDLVQRNA. The beta stranded transmembrane segment at 111-120 threads the bilayer; that stretch reads KGAAEFDWNI. The Chloroplast intermembrane portion of the chain corresponds to 121-127; that stretch reads WKFQKDQ. The beta stranded transmembrane segment at 128-137 threads the bilayer; it reads DLRLRIGYEM. Residues 138–142 are Cytoplasmic-facing; the sequence is FEKVP. A beta stranded membrane pass occupies residues 143-152; sequence YMQIRENNWT. Over 153–158 the chain is Chloroplast intermembrane; that stretch reads FNTNLK. The beta stranded transmembrane segment at 159–167 threads the bilayer; it reads GKWNVRYDL.

It belongs to the plastid outer envelope porin OEP21 (TC 1.B.29) family.

The protein localises to the plastid. Its subcellular location is the etioplast membrane. It is found in the chloroplast outer membrane. Its function is as follows. Voltage-dependent rectifying anion channel that facilitates the translocation between chloroplast and cytoplasm of phosphorylated carbohydrates such as triosephosphate, 3-phosphoglycerate and inorganic phosphate (Pi) depending of ATP to triosephosphate ratio in the plastidial intermembrane space; in high triosephosphate/ATP conditions (e.g. photosynthesis), export of triosphosphate from chloroplast (outward rectifying channels), but in high ATP/triosephosphate conditions (e.g. dark phase), import of phosphosolutes (inward rectifying channels). The chain is Outer envelope pore protein 21A, chloroplastic (OEP21A) from Arabidopsis thaliana (Mouse-ear cress).